Reading from the N-terminus, the 1333-residue chain is Aldehyde oxidase 1 (1333 aa).

The 2Fe-2S ferredoxin-type domain occupies 4–91 (PQLLFYVNGQ…GTAVTTVEGI (88 aa)). C43, C48, C51, and C73 together coordinate [2Fe-2S] cluster. Q112 serves as a coordination point for Mo-molybdopterin. [2Fe-2S] cluster is bound by residues C113, C116, C148, and C150. C150 contacts Mo-molybdopterin. Positions 235–420 (FYSNRMTWIS…VSVNIPCSRK (186 aa)) constitute an FAD-binding PCMH-type domain. Residues 263–270 (IVMGYTSV), A344, S353, H357, D366, and L410 each bind FAD. Mo-molybdopterin contacts are provided by residues 801–802 (AF) and M1042. Position 1063 is a phosphoserine (S1063). Mo-molybdopterin is bound by residues 1083–1086 (GSVV), Q1198, and L1263. Catalysis depends on E1265, which acts as the Proton acceptor; for azaheterocycle hydroxylase activity.

The protein belongs to the xanthine dehydrogenase family. Homodimer. It depends on [2Fe-2S] cluster as a cofactor. Requires FAD as cofactor. Mo-molybdopterin serves as cofactor. Post-translationally, the N-terminus is blocked. In terms of tissue distribution, expression in liver (at protein level). Also detected in heart, lung, spleen and kidney.

The protein resides in the cytoplasm. It catalyses the reaction an aldehyde + O2 + H2O = a carboxylate + H2O2 + H(+). It carries out the reaction retinal + O2 + H2O = retinoate + H2O2 + H(+). Inhibited by menadione and isovanillin. Not inhibited by allopurinol, a xanthine dehydrogenase potent inhibitor. Inhibited by the flavonoids quercetin, myricetin and genistein. Nitric oxide generation is inhibited by raloxifene and competitively inhibited by an increase in oxygen levels. In terms of biological role, oxidase with broad substrate specificity, oxidizing aromatic azaheterocycles, such as N1-methylnicotinamide, N-methylphthalazinium and phthalazine, as well as aldehydes, such as benzaldehyde, retinal, pyridoxal, and vanillin. Plays a role in the metabolism of xenobiotics and drugs containing aromatic azaheterocyclic substituents. Participates in the bioactivation of prodrugs such as famciclovir, catalyzing the oxidation step from 6-deoxypenciclovir to penciclovir, which is a potent antiviral agent. Is probably involved in the regulation of reactive oxygen species homeostasis. Is a prominent source of superoxide generation via the one-electron reduction of molecular oxygen. Also catalyzes nitric oxide (NO) production; under anaerobic conditions, reduces nitrite to NO with NADH or aldehyde as electron donor, but under aerobic conditions, NADH is the preferred substrate. These reactions may be catalyzed by several isozymes. May play a role in adipogenesis. This is Aldehyde oxidase 1 from Rattus norvegicus (Rat).